A 96-amino-acid chain; its full sequence is Protein C4 (96 aa).

Glycine 2 is lipidated: N-myristoyl glycine; by host. A disordered region spans residues serine 66 to methionine 96. Polar residues predominate over residues glutamine 77–glutamate 89.

This sequence belongs to the geminiviridae protein AC4/C4 family.

The protein localises to the host cell membrane. Its function is as follows. Pathogenicity determinant. May act as a suppressor of RNA-mediated gene silencing, also known as post-transcriptional gene silencing (PTGS), a mechanism of plant viral defense that limits the accumulation of viral RNAs. In Cynanchum acutum (Tomato), this protein is Protein C4.